Reading from the N-terminus, the 366-residue chain is tRNA-specific 2-thiouridylase MnmA (366 aa).

ATP is bound by residues 6–13 (AMSGGVDS) and Leu32. The Nucleophile role is filled by Cys101. A disulfide bridge links Cys101 with Cys198. Position 125 (Gly125) interacts with ATP. Residues 148–150 (KDQ) form an interaction with tRNA region. Cys198 acts as the Cysteine persulfide intermediate in catalysis.

Belongs to the MnmA/TRMU family.

It is found in the cytoplasm. It catalyses the reaction S-sulfanyl-L-cysteinyl-[protein] + uridine(34) in tRNA + AH2 + ATP = 2-thiouridine(34) in tRNA + L-cysteinyl-[protein] + A + AMP + diphosphate + H(+). Functionally, catalyzes the 2-thiolation of uridine at the wobble position (U34) of tRNA, leading to the formation of s(2)U34. This chain is tRNA-specific 2-thiouridylase MnmA, found in Nocardioides sp. (strain ATCC BAA-499 / JS614).